The sequence spans 209 residues: CASP-like protein 2A1 (209 aa).

The Cytoplasmic segment spans residues 1 to 38 (MSKMAEEKVLAAPATVDGGMQSSGDLQASSAAAARVRP). Residues 39–59 (VETLLRAAPLGLCVAAMAIML) form a helical membrane-spanning segment. Residues 60 to 80 (RNSVTNEYGTVSYSDLGGFKY) are Extracellular-facing. The helical transmembrane segment at 81 to 101 (LVYANGLCAAYSLASAFYIAV) threads the bilayer. The Cytoplasmic portion of the chain corresponds to 102–109 (PRPATLSR). A helical membrane pass occupies residues 110–130 (SWVVFLLDQVFTYLILAAGAA). At 131–163 (SAELLYLAYNGDKEVTWSEACGVFGGFCRQART) the chain is on the extracellular side. Residues 164-184 (SVAITFASVACYILLSLISSY) traverse the membrane as a helical segment. At 185–209 (RLFSAYDPPQPSLGNKGVEIAAFPR) the chain is on the cytoplasmic side.

Belongs to the Casparian strip membrane proteins (CASP) family. Homodimer and heterodimers.

Its subcellular location is the cell membrane. This chain is CASP-like protein 2A1, found in Oryza sativa subsp. indica (Rice).